A 212-amino-acid chain; its full sequence is MVSRMVSTMLSGLLFWLASGWTPAFAYSPRTPDRVSEADIQRLLHGVMEQLGIARPRVEYPAHQAMNLVGPQSIEGGAHEGLQHLGPFGNIPNIVAELTGDNIPKDFSEDQGYPDPPNPCPVGKTADDGCLENTPDTAEFSREFQLHQHLFDPEHDYPGLGKWNKKLLYEKMKGGERRKRRSVNPYLQGQRLDNVVAKKSVPHFSDEDKDPE.

Positions 1–26 are cleaved as a signal peptide; the sequence is MVSRMVSTMLSGLLFWLASGWTPAFA. The cysteines at positions 120 and 130 are disulfide-linked. Phosphoserine is present on residues Ser-141 and Ser-205. The interval 174-212 is disordered; that stretch reads GGERRKRRSVNPYLQGQRLDNVVAKKSVPHFSDEDKDPE.

This sequence belongs to the 7B2 family. In terms of assembly, interacts with PCSK2/PC2 early in the secretory pathway. Dissociation occurs at later stages. Proteolytically cleaved in the Golgi by a furin-like convertase to generate bioactive peptides. In terms of processing, sulfated on tyrosine residues.

Its subcellular location is the secreted. In terms of biological role, acts as a molecular chaperone for PCSK2/PC2, preventing its premature activation in the regulated secretory pathway. Binds to inactive PCSK2 in the endoplasmic reticulum and facilitates its transport from there to later compartments of the secretory pathway where it is proteolytically matured and activated. Also required for cleavage of PCSK2 but does not appear to be involved in its folding. Plays a role in regulating pituitary hormone secretion. The C-terminal peptide inhibits PCSK2 in vitro. This chain is Neuroendocrine protein 7B2 (SCG5), found in Homo sapiens (Human).